Here is a 196-residue protein sequence, read N- to C-terminus: Aliphatic amidase regulator (196 aa).

One can recognise an ANTAR domain in the interval 129-190 (MAKLKQKTEQ…PILKIAQELL (62 aa)).

As to quaternary structure, forms a complex with AmiC.

Its function is as follows. Positive controlling element of AmiE, the gene for aliphatic amidase. Acts as a transcriptional antitermination factor. It is thought to allow RNA polymerase read through a rho-independent transcription terminator between the AmiE promoter and gene. This is Aliphatic amidase regulator (amiR) from Pseudomonas aeruginosa (strain ATCC 15692 / DSM 22644 / CIP 104116 / JCM 14847 / LMG 12228 / 1C / PRS 101 / PAO1).